Consider the following 73-residue polypeptide: Alternative prion protein (73 aa).

The chain crosses the membrane as a helical span at residues 32–52 (WWWLGAASWWWLGAAPWWWLG).

Detected in brain homogenate, primary neurons, and peripheral blood mononuclear cells (at protein level).

The protein localises to the mitochondrion outer membrane. The protein is Alternative prion protein (PRNP) of Homo sapiens (Human).